A 600-amino-acid chain; its full sequence is Aspartate--tRNA(Asp/Asn) ligase (600 aa).

Glutamate 187 serves as a coordination point for L-aspartate. Positions 211 to 214 (QIFK) are aspartate. The L-aspartate site is built by arginine 233 and histidine 463. 233 to 235 (RDE) contacts ATP. An ATP-binding site is contributed by glutamate 497. Arginine 504 is a binding site for L-aspartate. 549 to 552 (GVDR) is an ATP binding site.

The protein belongs to the class-II aminoacyl-tRNA synthetase family. Type 1 subfamily. As to quaternary structure, homodimer.

The protein localises to the cytoplasm. The catalysed reaction is tRNA(Asx) + L-aspartate + ATP = L-aspartyl-tRNA(Asx) + AMP + diphosphate. Aspartyl-tRNA synthetase with relaxed tRNA specificity since it is able to aspartylate not only its cognate tRNA(Asp) but also tRNA(Asn). Reaction proceeds in two steps: L-aspartate is first activated by ATP to form Asp-AMP and then transferred to the acceptor end of tRNA(Asp/Asn). In Wolbachia pipientis subsp. Culex pipiens (strain wPip), this protein is Aspartate--tRNA(Asp/Asn) ligase.